The sequence spans 659 residues: Acetyl-coenzyme A synthetase (659 aa).

CoA-binding positions include 206-209 and threonine 324; that span reads RRGK. Residues 400 to 402, 424 to 429, aspartate 516, arginine 531, and arginine 542 each bind ATP; these read GEP and DTWWQT. Mg(2+) is bound by residues valine 553 and histidine 555. Arginine 600 contacts CoA.

It belongs to the ATP-dependent AMP-binding enzyme family. Mg(2+) is required as a cofactor.

The catalysed reaction is acetate + ATP + CoA = acetyl-CoA + AMP + diphosphate. Functionally, catalyzes the conversion of acetate into acetyl-CoA (AcCoA), an essential intermediate at the junction of anabolic and catabolic pathways. AcsA undergoes a two-step reaction. In the first half reaction, AcsA combines acetate with ATP to form acetyl-adenylate (AcAMP) intermediate. In the second half reaction, it can then transfer the acetyl group from AcAMP to the sulfhydryl group of CoA, forming the product AcCoA. This chain is Acetyl-coenzyme A synthetase (acsA), found in Methanothrix thermoacetophila (strain DSM 6194 / JCM 14653 / NBRC 101360 / PT) (Methanosaeta thermophila).